A 93-amino-acid chain; its full sequence is Integration host factor subunit beta (93 aa).

Residues 59-93 (RVGRNPKTGQSVSLDGKFVPHFKPGKELRDRVNDD) form a disordered region. Residues 82–93 (PGKELRDRVNDD) are compositionally biased toward basic and acidic residues.

The protein belongs to the bacterial histone-like protein family. In terms of assembly, heterodimer of an alpha and a beta chain.

Its function is as follows. This protein is one of the two subunits of integration host factor, a specific DNA-binding protein that functions in genetic recombination as well as in transcriptional and translational control. This Stutzerimonas stutzeri (strain A1501) (Pseudomonas stutzeri) protein is Integration host factor subunit beta.